The sequence spans 489 residues: Argininosuccinate lyase (489 aa).

The segment at 1 to 20 is disordered; that stretch reads MSEPSAAVGQRPGGESAPAH.

Belongs to the lyase 1 family. Argininosuccinate lyase subfamily.

It localises to the cytoplasm. The catalysed reaction is 2-(N(omega)-L-arginino)succinate = fumarate + L-arginine. Its pathway is amino-acid biosynthesis; L-arginine biosynthesis; L-arginine from L-ornithine and carbamoyl phosphate: step 3/3. The protein is Argininosuccinate lyase of Acidothermus cellulolyticus (strain ATCC 43068 / DSM 8971 / 11B).